A 335-amino-acid polypeptide reads, in one-letter code: MGCLLFLVLLEFQKIWGSFEAPQTSFPFRFLQISSFANHSWTRTDGLMWLGELQPYTWRNESSTIRFLKHWSQGTFSDQQWEQLQHTFQVYRSSFTRDIREFVKMLPGDYPFEIQISGGCELLPRNISESFLRAALQEKDVLSFQGMSWVSAPDAPPWSQVVCKVLNEDQGTKETVHWLLHDICPELVKGLMQTGKSELEKQVKPEAWLSSGPSPGPDRLLLGCHVSGFYPKPVWVMWMRGEQEEPGTQQGDVMPNADSTWYLRVTLEVAAGEAAGLSCRVKHSSLGDQDIILYWDGKRVSRGLIVVLVILVFVLLFVGGLVFWFRKHRRYQDIS.

The N-terminal stretch at methionine 1–glycine 17 is a signal peptide. The Extracellular segment spans residues serine 18–leucine 304. N-linked (GlcNAc...) asparagine glycans are attached at residues asparagine 38 and asparagine 60. Aspartate 98 provides a ligand contact to a D-galactosylceramide. Disulfide bonds link cysteine 120-cysteine 184 and cysteine 224-cysteine 279. N-linked (GlcNAc...) asparagine glycosylation is present at asparagine 126. A D-galactosylceramide contacts are provided by residues aspartate 169, aspartate 169 to threonine 172, and threonine 172. In terms of domain architecture, Ig-like spans proline 185–tryptophan 295. The helical transmembrane segment at isoleucine 305–phenylalanine 325 threads the bilayer. The Cytoplasmic portion of the chain corresponds to arginine 326–serine 335. The Internalization signal motif lies at tyrosine 331–isoleucine 334.

As to quaternary structure, heterodimer with B2M (beta-2-microglobulin). Interacts with MHC II and CD74. In terms of tissue distribution, expressed on cortical thymocytes, on certain T-cell leukemias, and in various other tissues.

It localises to the cell membrane. Its subcellular location is the basolateral cell membrane. The protein localises to the endosome membrane. The protein resides in the lysosome membrane. It is found in the endoplasmic reticulum membrane. Its function is as follows. Antigen-presenting protein that binds self and non-self glycolipids and presents them to T-cell receptors on natural killer T-cells. This chain is Antigen-presenting glycoprotein CD1d (CD1D), found in Ovis aries (Sheep).